The sequence spans 475 residues: Adenylyl cyclase-associated protein 1 (475 aa).

The residue at position 2 (Ala2) is an N-acetylalanine. A Phosphotyrosine modification is found at Tyr31. Ser34 bears the Phosphoserine mark. Position 81 is an N6-acetyllysine (Lys81). Disordered regions lie at residues 216 to 237 (ELSG…PPCP) and 278 to 319 (MKTH…KKEP). The span at 218–228 (SGLPSGPSAGS) shows a compositional bias: low complexity. Lys287 bears the N6-methyllysine mark. Ser290, Ser295, and Ser301 each carry phosphoserine. At Thr307 the chain carries Phosphothreonine. 2 positions are modified to phosphoserine: Ser308 and Ser310. A C-CAP/cofactor C-like domain is found at 319-453 (PAVLELEGKK…EGGDFNEFPV (135 aa)). A Glycyl lysine isopeptide (Lys-Gly) (interchain with G-Cter in SUMO1) cross-link involves residue Lys348.

The protein belongs to the CAP family. As to quaternary structure, homodimer. Binds actin monomers.

The protein localises to the cell membrane. Its function is as follows. Directly regulates filament dynamics and has been implicated in a number of complex developmental and morphological processes, including mRNA localization and the establishment of cell polarity. This chain is Adenylyl cyclase-associated protein 1 (CAP1), found in Homo sapiens (Human).